Reading from the N-terminus, the 570-residue chain is Pantothenate kinase 2, mitochondrial (570 aa).

Residues 1 to 31 (MRRLGPFHPRVHWAAPPSLSSGLHRLLFLRG) constitute a mitochondrion transit peptide. 2 disordered regions span residues 34–94 (IPSS…PRAR) and 127–198 (GRLG…SVSR). Positions 82–94 (RWRNGRGGRPRAR) match the Nucleolar localization signal motif. The segment covering 84-93 (RNGRGGRPRA) has biased composition (basic residues). Residues 155 to 164 (PEGRRQEPLR) show a composition bias toward basic and acidic residues. Residues Ser-168, Ser-169, and Ser-189 each carry the phosphoserine modification. A compositionally biased stretch (low complexity) spans 168–179 (SSASVPAVGASA). Residues 268–275 (LELKDLTL) carry the Nuclear export signal motif. Residue Glu-338 is the Proton acceptor of the active site. Ser-392, Ser-395, and Arg-407 together coordinate acetyl-CoA.

It belongs to the type II pantothenate kinase family. As to quaternary structure, homodimer. Post-translationally, synthesized as a 62-kDa precursor which is proteolytically processed by the mitochondrial-processing peptidase (MPP) via a 59-kDa intermediate to yield the mature mitochondrial 48-kDa subunit. Expressed in the brain (at protein level). Ubiquitous. Highly expressed in the testis. Expressed in the umbilical vein endothelial cells (HUVEC).

It is found in the mitochondrion. The protein localises to the mitochondrion intermembrane space. It localises to the nucleus. The protein resides in the cytoplasm. It carries out the reaction (R)-pantothenate + ATP = (R)-4'-phosphopantothenate + ADP + H(+). It functions in the pathway cofactor biosynthesis; coenzyme A biosynthesis; CoA from (R)-pantothenate: step 1/5. With respect to regulation, strongly inhibited by acetyl-CoA and its thioesters. Activated by palmitoylcarnitine. In terms of biological role, mitochondrial isoform that catalyzes the phosphorylation of pantothenate to generate 4'-phosphopantothenate in the first and rate-determining step of coenzyme A (CoA) synthesis. Required for angiogenic activity of umbilical vein of endothelial cells (HUVEC). Its function is as follows. Cytoplasmic isoform that catalyzes the phosphorylation of pantothenate to generate 4'-phosphopantothenate in the first and rate-determining step of coenzyme A (CoA) synthesis. In Homo sapiens (Human), this protein is Pantothenate kinase 2, mitochondrial (PANK2).